The sequence spans 250 residues: Methylthioribulose-1-phosphate dehydratase (250 aa).

Substrate is bound at residue Cys103. Zn(2+) is bound by residues His121 and His123. Glu146 serves as the catalytic Proton donor/acceptor. Zn(2+) is bound at residue His211.

Belongs to the aldolase class II family. MtnB subfamily. Requires Zn(2+) as cofactor.

It localises to the cytoplasm. It catalyses the reaction 5-(methylsulfanyl)-D-ribulose 1-phosphate = 5-methylsulfanyl-2,3-dioxopentyl phosphate + H2O. It participates in amino-acid biosynthesis; L-methionine biosynthesis via salvage pathway; L-methionine from S-methyl-5-thio-alpha-D-ribose 1-phosphate: step 2/6. Functionally, catalyzes the dehydration of methylthioribulose-1-phosphate (MTRu-1-P) into 2,3-diketo-5-methylthiopentyl-1-phosphate (DK-MTP-1-P). The chain is Methylthioribulose-1-phosphate dehydratase from Clavispora lusitaniae (strain ATCC 42720) (Yeast).